Reading from the N-terminus, the 388-residue chain is tRNA-specific adenosine deaminase 1 (388 aa).

Residues 63–388 form the A to I editase domain; it reads CLATGVKCTP…PNGGNEFQWI (326 aa). His89 provides a ligand contact to Zn(2+). Glu91 functions as the Proton donor in the catalytic mechanism. Arg96 is a 1D-myo-inositol hexakisphosphate binding site. Cys144 and Cys201 together coordinate Zn(2+). Residues Lys204, Lys357, and Arg363 each coordinate 1D-myo-inositol hexakisphosphate.

It belongs to the ADAT1 family. The cofactor is 1D-myo-inositol hexakisphosphate. Zn(2+) serves as cofactor.

It localises to the cytoplasm. It is found in the nucleus. It carries out the reaction adenosine(37) in tRNA(Ala) + H2O + H(+) = inosine(37) in tRNA(Ala) + NH4(+). Functionally, deaminates adenosine-37 to inosine in tRNA-Ala. In Schizosaccharomyces pombe (strain 972 / ATCC 24843) (Fission yeast), this protein is tRNA-specific adenosine deaminase 1.